A 316-amino-acid chain; its full sequence is UDP-3-O-acylglucosamine N-acyltransferase 2 (316 aa).

The Proton acceptor role is filled by histidine 230.

This sequence belongs to the transferase hexapeptide repeat family. LpxD subfamily. As to quaternary structure, homotrimer.

The catalysed reaction is a UDP-3-O-[(3R)-3-hydroxyacyl]-alpha-D-glucosamine + a (3R)-hydroxyacyl-[ACP] = a UDP-2-N,3-O-bis[(3R)-3-hydroxyacyl]-alpha-D-glucosamine + holo-[ACP] + H(+). The protein operates within bacterial outer membrane biogenesis; LPS lipid A biosynthesis. Its function is as follows. Catalyzes the N-acylation of UDP-3-O-acylglucosamine using 3-hydroxyacyl-ACP as the acyl donor. Is involved in the biosynthesis of lipid A, a phosphorylated glycolipid that anchors the lipopolysaccharide to the outer membrane of the cell. This is UDP-3-O-acylglucosamine N-acyltransferase 2 from Sulfurimonas denitrificans (strain ATCC 33889 / DSM 1251) (Thiomicrospira denitrificans (strain ATCC 33889 / DSM 1251)).